A 106-amino-acid chain; its full sequence is Large ribosomal subunit protein uL23 (106 aa).

This sequence belongs to the universal ribosomal protein uL23 family. Part of the 50S ribosomal subunit. Contacts protein L29, and trigger factor when it is bound to the ribosome.

Its function is as follows. One of the early assembly proteins it binds 23S rRNA. One of the proteins that surrounds the polypeptide exit tunnel on the outside of the ribosome. Forms the main docking site for trigger factor binding to the ribosome. This Acinetobacter baumannii (strain SDF) protein is Large ribosomal subunit protein uL23.